We begin with the raw amino-acid sequence, 962 residues long: Translation initiation factor IF-2 (962 aa).

Positions 99–365 (VKAAQTQAAP…GKKGKKLKLE (267 aa)) are disordered. Over residues 117–141 (DAAKARAEAAARAEARAKAEAEAAK) the composition is skewed to basic and acidic residues. Over residues 145-155 (AKAGNKAKPAA) the composition is skewed to low complexity. A compositionally biased stretch (basic and acidic residues) spans 173–216 (KPAEESKAEKAQADKMPSKKPAEPKEKAAKPKHERNGKGKDAKK). A compositionally biased stretch (low complexity) spans 219–234 (KPAAPAVPQPVVSAEE). Residues 235–269 (QAQRDEEARRAAALRAHQEALLKEKQERQARREAM) show a composition bias toward basic and acidic residues. Low complexity predominate over residues 270–283 (KQQAEQQAKAAQEA). The segment covering 338-354 (GGRDRNNARNGDDERVR) has biased composition (basic and acidic residues). Residues 462-631 (PRPPVVTVMG…LLEAEVLELT (170 aa)) form the tr-type G domain. The segment at 471 to 478 (GHVDHGKT) is G1. 471 to 478 (GHVDHGKT) serves as a coordination point for GTP. A G2 region spans residues 496–500 (GITQH). The interval 517–520 (DTPG) is G3. GTP-binding positions include 517–521 (DTPGH) and 571–574 (NKID). The G4 stretch occupies residues 571-574 (NKID). Residues 607–609 (SAK) form a G5 region.

It belongs to the TRAFAC class translation factor GTPase superfamily. Classic translation factor GTPase family. IF-2 subfamily.

It is found in the cytoplasm. Functionally, one of the essential components for the initiation of protein synthesis. Protects formylmethionyl-tRNA from spontaneous hydrolysis and promotes its binding to the 30S ribosomal subunits. Also involved in the hydrolysis of GTP during the formation of the 70S ribosomal complex. This chain is Translation initiation factor IF-2, found in Neisseria meningitidis serogroup C (strain 053442).